The sequence spans 640 residues: uncharacterized protein (640 aa).

The next 14 helical transmembrane spans lie at 8-28 (GGVV…LGMF), 52-72 (LGGF…CYLI), 90-110 (LFVA…FLLA), 136-156 (LWYA…LVVL), 179-199 (VFML…LHAW), 208-228 (PSPV…YGIV), 241-261 (WWGL…VLQA), 277-297 (ENMG…DTGA), 298-318 (YGPA…HAAF), 352-372 (TVFF…AGFV), 391-411 (IVAL…GLSV), 446-466 (AIAA…APMV), 497-517 (IAPG…AVLA), and 619-639 (GSVH…LVVA).

It belongs to the complex I subunit 4 family.

Its subcellular location is the cell membrane. This is an uncharacterized protein from Mycobacterium tuberculosis (strain CDC 1551 / Oshkosh).